The sequence spans 138 residues: Putative nickel-responsive regulator (138 aa).

Ni(2+) is bound by residues H78, H89, H91, and C97.

The protein belongs to the transcriptional regulatory CopG/NikR family. It depends on Ni(2+) as a cofactor.

Its function is as follows. Transcriptional regulator. This Pyrococcus abyssi (strain GE5 / Orsay) protein is Putative nickel-responsive regulator.